We begin with the raw amino-acid sequence, 644 residues long: MVTALSDVNNTDNYGAGQIQVLEGLEAVRKRPGMYIGSTSERGLHHLVWEIVDNSIDEALAGYANQIEVVIEKDNWIKVTDNGRGIPVDIQEKMGRPAVEVILTVLHAGGKFGGGGYKVSGGLHGVGSSVVNALSQDLEVYVHRNETIYHQAYKKGVPQFDLKEVGTTDKTGTVIRFKADGEIFTETTVYNYETLQQRIRELAFLNKGIQITLRDERDEENVREDSYHYEGGIKSYVELLNENKEPIHDEPIYIHQSKDDIEVEIAIQYNSGYATNLLTYANNIHTYEGGTHEDGFKRALTRVLNSYGLSSKIMKEDKDRLSGEDTREGMTAIISIKHGDPQFEGQTKTKLGNSEVRQVVDKLFSEHFERFLYENPQVARTVVEKGIMAARARVAAKKAREVTRRKSALDVASLPGKLADCSSKSPEECEIFLVEGDSAGGSTKSGRDSRTQAILPLRGKILNVEKARLDRILNNNEIRQMITAFGTGIGGDFDLAKARYHKIVIMTDADVDGAHIRTLLLTFFYRFMRPLIEAGYVYIAQPPLYKLTQGKQKYYVYNDRELDKLKSELNPTPKWSIARYKGLGEMNADQLWETTMNPEHRALLQVKLEDAIEADQTFEMLMGDVVENRRQFIEDNAVYANLDF.

One can recognise a Toprim domain in the interval 429–543; it reads CEIFLVEGDS…AGYVYIAQPP (115 aa). Residues glutamate 435, aspartate 508, and aspartate 510 each coordinate Mg(2+).

It belongs to the type II topoisomerase GyrB family. As to quaternary structure, heterotetramer, composed of two GyrA and two GyrB chains. In the heterotetramer, GyrA contains the active site tyrosine that forms a transient covalent intermediate with DNA, while GyrB binds cofactors and catalyzes ATP hydrolysis. Mg(2+) serves as cofactor. Mn(2+) is required as a cofactor. The cofactor is Ca(2+).

It localises to the cytoplasm. It carries out the reaction ATP-dependent breakage, passage and rejoining of double-stranded DNA.. In terms of biological role, a type II topoisomerase that negatively supercoils closed circular double-stranded (ds) DNA in an ATP-dependent manner to modulate DNA topology and maintain chromosomes in an underwound state. Negative supercoiling favors strand separation, and DNA replication, transcription, recombination and repair, all of which involve strand separation. Also able to catalyze the interconversion of other topological isomers of dsDNA rings, including catenanes and knotted rings. Type II topoisomerases break and join 2 DNA strands simultaneously in an ATP-dependent manner. The polypeptide is DNA gyrase subunit B (Staphylococcus aureus (strain MRSA252)).